Consider the following 70-residue polypeptide: SPbeta prophage-derived uncharacterized protein YorZ (70 aa).

This Bacillus subtilis (strain 168) protein is SPbeta prophage-derived uncharacterized protein YorZ (yorZ).